The chain runs to 477 residues: Inositol phosphosphingolipids phospholipase C (477 aa).

Topologically, residues 1–398 (MYNRKDRDVH…QRQKFFRGLH (398 aa)) are cytoplasmic. E100 contacts Mg(2+). H334 (proton acceptor) is an active-site residue. The helical transmembrane segment at 399–417 (FWASILLLIASLVVTTFTA) threads the bilayer. At 418–424 (NKAGWSS) the chain is on the mitochondrial intermembrane side. Residues 425–449 (IFWVLFAIAVSISGTIDGAISFLFG) form a helical membrane-spanning segment. Over 450–477 (RSEIRALIEVEQEVLDAEHHLQTFLSEK) the chain is Cytoplasmic.

It belongs to the neutral sphingomyelinase family. Mg(2+) is required as a cofactor.

It is found in the endoplasmic reticulum membrane. The protein resides in the mitochondrion outer membrane. The enzyme catalyses an N-acyl-(4R)-4-hydroxysphinganine-1-phosphoinositol + H2O = 1D-myo-inositol 1-phosphate + an N-acyl-(4R)-4-hydroxysphinganine + H(+). It carries out the reaction a mannosylinositol-1-phospho-N-acyl-sphingoid base + H2O = mannosylinositol-1-phosphate + an N-acyl-sphingoid base + H(+). The catalysed reaction is an inositol phosphomannosylinositol-1-phospho-N-acyl-(4R)-4-hydroxysphinganine + H2O = mannosyldiinositol-1-phosphate + an N-acyl-(4R)-4-hydroxysphinganine + H(+). It functions in the pathway lipid metabolism; sphingolipid metabolism. Its activity is regulated as follows. Activated through localization to mitochondria in specific growth phases. Its function is as follows. Responsible for the hydrolysis of the phosphosphingolipids (IPS), inositol phosphorylceramide (IPC), mannosylinositol phosphorylceramide (MIPC), and mannosyldiinositol phosphorylceramide (M(IP)2C). Regulates sphingolipid metabolism in mitochondria, especially the formation of alpha-hydroxylated very long chain phytoceramides. The generated ceramides contribute to the normal function of mitochondria. Also active on sphingomyelin (SM), but this activity is probably not physiologically relevant. The protein is Inositol phosphosphingolipids phospholipase C of Saccharomyces cerevisiae (strain ATCC 204508 / S288c) (Baker's yeast).